The chain runs to 276 residues: Large ribosomal subunit protein uL2 (276 aa).

2 disordered regions span residues 26 to 45 (RSTP…GRNC) and 224 to 276 (AMNP…RGQK). The span at 259-276 (RDKKKASSKLIIKRRGQK) shows a compositional bias: basic residues.

The protein belongs to the universal ribosomal protein uL2 family. As to quaternary structure, part of the 50S ribosomal subunit. Forms a bridge to the 30S subunit in the 70S ribosome.

Its function is as follows. One of the primary rRNA binding proteins. Required for association of the 30S and 50S subunits to form the 70S ribosome, for tRNA binding and peptide bond formation. It has been suggested to have peptidyltransferase activity; this is somewhat controversial. Makes several contacts with the 16S rRNA in the 70S ribosome. The protein is Large ribosomal subunit protein uL2 of Oleidesulfovibrio alaskensis (strain ATCC BAA-1058 / DSM 17464 / G20) (Desulfovibrio alaskensis).